Reading from the N-terminus, the 294-residue chain is Mating type protein mtA-1 (294 aa).

Residues 46-101 (TAKKKVNGFMGFRSNYSPLFSYLPQKMRSPFMTILWQYDPYHNEWDFMCSVYSSIR) constitute a DNA-binding region (alpha box).

The protein belongs to the MATALPHA1 family.

The protein localises to the nucleus. Its function is as follows. Mating type proteins are sequence specific DNA-binding proteins that act as master switches in fungal differentiation by controlling gene expression in a cell type-specific fashion. Transcriptional activator that induces the transcription of alpha-specific genes. The chain is Mating type protein mtA-1 (MTA1) from Sordaria equina.